The chain runs to 147 residues: 3-dehydroquinate dehydratase (147 aa).

The active-site Proton acceptor is the Tyr23. Asn74, His80, and Asp87 together coordinate substrate. The active-site Proton donor is the His100. Substrate contacts are provided by residues Ile101–Ser102 and Arg111.

Belongs to the type-II 3-dehydroquinase family. Homododecamer.

The catalysed reaction is 3-dehydroquinate = 3-dehydroshikimate + H2O. The protein operates within metabolic intermediate biosynthesis; chorismate biosynthesis; chorismate from D-erythrose 4-phosphate and phosphoenolpyruvate: step 3/7. Catalyzes a trans-dehydration via an enolate intermediate. This Bacillus pumilus (strain SAFR-032) protein is 3-dehydroquinate dehydratase.